The sequence spans 543 residues: Adenosine deaminase 2 (543 aa).

Residues 1–26 form the signal peptide; it reads MFLKFKNIFFIVLTLSIVFNGLIVNS. The segment covering 31–54 has biased composition (low complexity); it reads INNKNNNNNNNNKDLSSSESGSSS. The interval 31–58 is disordered; that stretch reads INNKNNNNNNNNKDLSSSESGSSSDINP. The N-linked (GlcNAc...) asparagine glycan is linked to asparagine 126. Zn(2+) contacts are provided by histidine 144 and histidine 146. Asparagine 179 carries an N-linked (GlcNAc...) asparagine glycan. Residue 232–239 participates in substrate binding; sequence WRKFDGIF. 2 N-linked (GlcNAc...) asparagine glycosylation sites follow: asparagine 309 and asparagine 326. Glycine 355 is a binding site for substrate. Residue histidine 389 coordinates Zn(2+). Glutamate 392 acts as the Proton donor in catalysis. An N-linked (GlcNAc...) asparagine glycan is attached at asparagine 397. Histidine 414 (proton acceptor) is an active-site residue. Residue aspartate 471 participates in Zn(2+) binding. Aspartate 472 provides a ligand contact to substrate. Residues asparagine 508 and asparagine 514 are each glycosylated (N-linked (GlcNAc...) asparagine).

The protein belongs to the metallo-dependent hydrolases superfamily. Adenosine and AMP deaminases family. ADGF subfamily. Zn(2+) serves as cofactor.

It is found in the secreted. The catalysed reaction is adenosine + H2O + H(+) = inosine + NH4(+). In terms of biological role, adenosine deaminase that may contribute to the degradation of extracellular adenosine, a signaling molecule that controls a variety of cellular responses. May play a role in the regulation of cell proliferation. This chain is Adenosine deaminase 2, found in Dictyostelium discoideum (Social amoeba).